Here is a 506-residue protein sequence, read N- to C-terminus: Lysine--tRNA ligase (506 aa).

Residues glutamate 411 and glutamate 418 each coordinate Mg(2+).

The protein belongs to the class-II aminoacyl-tRNA synthetase family. Homodimer. Mg(2+) serves as cofactor.

It is found in the cytoplasm. It catalyses the reaction tRNA(Lys) + L-lysine + ATP = L-lysyl-tRNA(Lys) + AMP + diphosphate. The polypeptide is Lysine--tRNA ligase (Thermosynechococcus vestitus (strain NIES-2133 / IAM M-273 / BP-1)).